We begin with the raw amino-acid sequence, 698 residues long: Methionine synthase reductase (698 aa).

The 143-residue stretch at 5–147 folds into the Flavodoxin-like domain; that stretch reads LLLYATQQGQ…VVEPWIAGLW (143 aa). 93–124 serves as a coordination point for FMN; that stretch reads LLGLGDSEYTYFCNGGKIIDKRLQELGARHFY. The tract at residues 166 to 247 is hinge; the sequence is ALPVASPASS…ASLNIPGLPP (82 aa). Phosphoserine occurs at positions 171 and 189. The FAD-binding FR-type domain occupies 271-533; that stretch reads DPVFQVPISK…PRTTNSFHLP (263 aa). Lysine 291 contacts NADP(+). Residues 451 to 454 and 487 to 490 contribute to the FAD site; these read RPYS and GVCT. NADP(+)-binding positions include 610-611, 624-626, and aspartate 659; these read SR and YVQ. Tryptophan 697 contributes to the FAD binding site.

In terms of assembly, forms a multiprotein complex with MMACHC, MMADHC and MTR. The cofactor is FAD. FMN serves as cofactor. As to expression, found in all tissues tested, particularly abundant in skeletal muscle.

Its subcellular location is the cytoplasm. It carries out the reaction 2 methylcob(III)alamin-[methionine synthase] + 2 S-adenosyl-L-homocysteine + NADP(+) + H(+) = 2 cob(II)alamin-[methionine synthase] + 2 S-adenosyl-L-methionine + NADPH. The catalysed reaction is 2 cob(II)alamin + A + 2 H2O + 2 H(+) = 2 aquacob(III)alamin + AH2. In terms of biological role, key enzyme in methionine and folate homeostasis responsible for the reactivation of methionine synthase (MTR/MS) activity by catalyzing the reductive methylation of MTR-bound cob(II)alamin. Cobalamin (vitamin B12) forms a complex with MTR to serve as an intermediary in methyl transfer reactions that cycles between MTR-bound methylcob(III)alamin and MTR bound-cob(I)alamin forms, and occasional oxidative escape of the cob(I)alamin intermediate during the catalytic cycle leads to the inactive cob(II)alamin species. The processing of cobalamin in the cytosol occurs in a multiprotein complex composed of at least MMACHC, MMADHC, MTRR and MTR which may contribute to shuttle safely and efficiently cobalamin towards MTR in order to produce methionine. Also necessary for the utilization of methyl groups from the folate cycle, thereby affecting transgenerational epigenetic inheritance. Also acts as a molecular chaperone for methionine synthase by stabilizing apoMTR and incorporating methylcob(III)alamin into apoMTR to form the holoenzyme. Also serves as an aquacob(III)alamin reductase by reducing aquacob(III)alamin to cob(II)alamin; this reduction leads to stimulation of the conversion of apoMTR and aquacob(III)alamin to MTR holoenzyme. The polypeptide is Methionine synthase reductase (Homo sapiens (Human)).